The sequence spans 544 residues: Chaperonin GroEL (544 aa).

Residues 29–32 (TLGP), Lys50, 86–90 (DGTTT), Gly414, 479–481 (DAA), and Asp495 each bind ATP.

This sequence belongs to the chaperonin (HSP60) family. As to quaternary structure, forms a cylinder of 14 subunits composed of two heptameric rings stacked back-to-back. Interacts with the co-chaperonin GroES.

Its subcellular location is the cytoplasm. It catalyses the reaction ATP + H2O + a folded polypeptide = ADP + phosphate + an unfolded polypeptide.. In terms of biological role, together with its co-chaperonin GroES, plays an essential role in assisting protein folding. The GroEL-GroES system forms a nano-cage that allows encapsulation of the non-native substrate proteins and provides a physical environment optimized to promote and accelerate protein folding. This Treponema denticola (strain ATCC 35405 / DSM 14222 / CIP 103919 / JCM 8153 / KCTC 15104) protein is Chaperonin GroEL.